The chain runs to 192 residues: Fe/S biogenesis protein NfuA (192 aa).

Cys-149 and Cys-152 together coordinate [4Fe-4S] cluster.

It belongs to the NfuA family. In terms of assembly, homodimer. Requires [4Fe-4S] cluster as cofactor.

Functionally, involved in iron-sulfur cluster biogenesis. Binds a 4Fe-4S cluster, can transfer this cluster to apoproteins, and thereby intervenes in the maturation of Fe/S proteins. Could also act as a scaffold/chaperone for damaged Fe/S proteins. The sequence is that of Fe/S biogenesis protein NfuA from Pseudoalteromonas atlantica (strain T6c / ATCC BAA-1087).